Reading from the N-terminus, the 452-residue chain is Exodeoxyribonuclease 7 large subunit (452 aa).

This sequence belongs to the XseA family. As to quaternary structure, heterooligomer composed of large and small subunits.

It is found in the cytoplasm. It catalyses the reaction Exonucleolytic cleavage in either 5'- to 3'- or 3'- to 5'-direction to yield nucleoside 5'-phosphates.. Bidirectionally degrades single-stranded DNA into large acid-insoluble oligonucleotides, which are then degraded further into small acid-soluble oligonucleotides. This chain is Exodeoxyribonuclease 7 large subunit, found in Lysinibacillus sphaericus (strain C3-41).